The primary structure comprises 594 residues: NADH-quinone oxidoreductase subunit C/D (594 aa).

The tract at residues 1 to 185 (MTTGSALYIP…DPFSLNLAKQ (185 aa)) is NADH dehydrogenase I subunit C. Residues 209–594 (DYMFLNLGPN…IDFVMADVDR (386 aa)) form an NADH dehydrogenase I subunit D region.

In the N-terminal section; belongs to the complex I 30 kDa subunit family. This sequence in the C-terminal section; belongs to the complex I 49 kDa subunit family. As to quaternary structure, NDH-1 is composed of 13 different subunits. Subunits NuoB, CD, E, F, and G constitute the peripheral sector of the complex.

It is found in the cell inner membrane. It catalyses the reaction a quinone + NADH + 5 H(+)(in) = a quinol + NAD(+) + 4 H(+)(out). Its function is as follows. NDH-1 shuttles electrons from NADH, via FMN and iron-sulfur (Fe-S) centers, to quinones in the respiratory chain. The immediate electron acceptor for the enzyme in this species is believed to be ubiquinone. Couples the redox reaction to proton translocation (for every two electrons transferred, four hydrogen ions are translocated across the cytoplasmic membrane), and thus conserves the redox energy in a proton gradient. This chain is NADH-quinone oxidoreductase subunit C/D, found in Pseudomonas fluorescens (strain Pf0-1).